A 440-amino-acid polypeptide reads, in one-letter code: Xaa-Pro dipeptidase (440 aa).

5 residues coordinate Mn(2+): Asp-244, Asp-255, His-335, Glu-380, and Glu-419.

This sequence belongs to the peptidase M24B family. Bacterial-type prolidase subfamily. It depends on Mn(2+) as a cofactor.

It carries out the reaction Xaa-L-Pro dipeptide + H2O = an L-alpha-amino acid + L-proline. In terms of biological role, splits dipeptides with a prolyl residue in the C-terminal position. The chain is Xaa-Pro dipeptidase from Shewanella baltica (strain OS185).